The chain runs to 319 residues: Dehydrogenase/reductase SDR family member 9 (319 aa).

Residues 1–17 (MLFWVLGLLILCGFLWT) form the signal peptide. Residues 34–58 (ITGC…HVIA) and Asp-83 each bind NAD(+). Ser-164 lines the substrate pocket. The Proton acceptor role is filled by Tyr-176. Lys-180 is a binding site for NAD(+).

The protein belongs to the short-chain dehydrogenases/reductases (SDR) family. Homotetramer. In terms of tissue distribution, highly expressed in trachea and epidermis. Detected at lower levels in spinal cord, bone marrow, brain, tongue, esophagus, heart, colon, testis, placenta, lung, skeletal muscle and lymph node.

The protein localises to the microsome membrane. It localises to the endoplasmic reticulum membrane. It catalyses the reaction 3beta-hydroxy-5alpha-pregnane-20-one + NAD(+) = 5alpha-pregnane-3,20-dione + NADH + H(+). It carries out the reaction 17beta-hydroxy-5alpha-androstan-3-one + NAD(+) = 5alpha-androstan-3,17-dione + NADH + H(+). The catalysed reaction is androsterone + NAD(+) = 5alpha-androstan-3,17-dione + NADH + H(+). The enzyme catalyses 5alpha-androstane-3alpha,17beta-diol + NAD(+) = 17beta-hydroxy-5alpha-androstan-3-one + NADH + H(+). It catalyses the reaction all-trans-retinol + NAD(+) = all-trans-retinal + NADH + H(+). It carries out the reaction 3alpha-hydroxy-5alpha-pregnan-20-one + NAD(+) = 5alpha-pregnane-3,20-dione + NADH + H(+). In terms of biological role, 3-alpha-hydroxysteroid dehydrogenase that converts 3-alpha-tetrahydroprogesterone (allopregnanolone) to dihydroxyprogesterone and 3-alpha-androstanediol to dihydroxyprogesterone. Also plays a role in the biosynthesis of retinoic acid from retinaldehyde. Can utilize both NADH and NADPH. The sequence is that of Dehydrogenase/reductase SDR family member 9 (DHRS9) from Homo sapiens (Human).